The chain runs to 81 residues: Sulfur carrier protein TusA (81 aa).

Cys-19 (cysteine persulfide intermediate) is an active-site residue.

The protein belongs to the sulfur carrier protein TusA family.

It localises to the cytoplasm. Sulfur carrier protein which probably makes part of a sulfur-relay system. In Shewanella piezotolerans (strain WP3 / JCM 13877), this protein is Sulfur carrier protein TusA.